Here is an 83-residue protein sequence, read N- to C-terminus: Putative defensin-like protein 66 (83 aa).

The N-terminal stretch at 1-22 (MGSSRLMITFIVVAMLAISSDL) is a signal peptide. 4 disulfide bridges follow: cysteine 38-cysteine 82, cysteine 42-cysteine 65, cysteine 51-cysteine 80, and cysteine 55-cysteine 81.

This sequence belongs to the DEFL family.

The protein localises to the secreted. The protein is Putative defensin-like protein 66 of Arabidopsis thaliana (Mouse-ear cress).